Reading from the N-terminus, the 729-residue chain is Phosphoribosylformylglycinamidine synthase subunit PurL (729 aa).

His54 is a catalytic residue. Tyr57 and Lys96 together coordinate ATP. Position 98 (Glu98) interacts with Mg(2+). Substrate-binding positions include 99–102 (SHNH) and Arg121. His100 (proton acceptor) is an active-site residue. Asp122 contacts Mg(2+). Gln245 contacts substrate. Asp273 is a Mg(2+) binding site. Residue 317-319 (ETQ) participates in substrate binding. 2 residues coordinate ATP: Asp495 and Gly532. Residue Asn533 participates in Mg(2+) binding. Substrate is bound at residue Ser535.

It belongs to the FGAMS family. As to quaternary structure, monomer. Part of the FGAM synthase complex composed of 1 PurL, 1 PurQ and 2 PurS subunits.

Its subcellular location is the cytoplasm. The enzyme catalyses N(2)-formyl-N(1)-(5-phospho-beta-D-ribosyl)glycinamide + L-glutamine + ATP + H2O = 2-formamido-N(1)-(5-O-phospho-beta-D-ribosyl)acetamidine + L-glutamate + ADP + phosphate + H(+). It participates in purine metabolism; IMP biosynthesis via de novo pathway; 5-amino-1-(5-phospho-D-ribosyl)imidazole from N(2)-formyl-N(1)-(5-phospho-D-ribosyl)glycinamide: step 1/2. In terms of biological role, part of the phosphoribosylformylglycinamidine synthase complex involved in the purines biosynthetic pathway. Catalyzes the ATP-dependent conversion of formylglycinamide ribonucleotide (FGAR) and glutamine to yield formylglycinamidine ribonucleotide (FGAM) and glutamate. The FGAM synthase complex is composed of three subunits. PurQ produces an ammonia molecule by converting glutamine to glutamate. PurL transfers the ammonia molecule to FGAR to form FGAM in an ATP-dependent manner. PurS interacts with PurQ and PurL and is thought to assist in the transfer of the ammonia molecule from PurQ to PurL. The polypeptide is Phosphoribosylformylglycinamidine synthase subunit PurL (Staphylococcus epidermidis (strain ATCC 35984 / DSM 28319 / BCRC 17069 / CCUG 31568 / BM 3577 / RP62A)).